A 185-amino-acid polypeptide reads, in one-letter code: Large ribosomal subunit protein uL22 (185 aa).

It belongs to the universal ribosomal protein uL22 family.

The polypeptide is Large ribosomal subunit protein uL22 (RPL17) (Debaryomyces hansenii (strain ATCC 36239 / CBS 767 / BCRC 21394 / JCM 1990 / NBRC 0083 / IGC 2968) (Yeast)).